The following is a 168-amino-acid chain: MFWLLIAILIVQRAAEMAVARQNEQKVKKQGAIEFGESHYPYIITMHILFFLSLIAEVLLMNKQPSSWWLGIAAVILSVQIVRYWALCSLGAYWNTKILVVPGVELVKKGPYKWMKHPNYAVVILEILLIPLLYQAYVTMCLFSIFNAVLLSVRIRAEDKALQEYSVK.

4 consecutive transmembrane segments (helical) span residues 1–21, 41–61, 68–88, and 123–143; these read MFWL…AVAR, PYII…VLLM, WWLG…WALC, and VILE…MCLF.

Its subcellular location is the cell membrane. This is an uncharacterized protein from Bacillus subtilis (strain 168).